The primary structure comprises 374 residues: 2-aminoethylphosphonate--pyruvate transaminase 1 (374 aa).

K195 carries the post-translational modification N6-(pyridoxal phosphate)lysine.

This sequence belongs to the class-V pyridoxal-phosphate-dependent aminotransferase family. PhnW subfamily. As to quaternary structure, homodimer. Pyridoxal 5'-phosphate is required as a cofactor.

The catalysed reaction is (2-aminoethyl)phosphonate + pyruvate = phosphonoacetaldehyde + L-alanine. In terms of biological role, involved in phosphonate degradation. The protein is 2-aminoethylphosphonate--pyruvate transaminase 1 of Polaromonas sp. (strain JS666 / ATCC BAA-500).